The sequence spans 150 residues: Deoxyuridine 5'-triphosphate nucleotidohydrolase (150 aa).

Substrate-binding positions include 67–69 (RSS), asparagine 80, and 84–86 (VID).

Belongs to the dUTPase family. Requires Mg(2+) as cofactor.

The catalysed reaction is dUTP + H2O = dUMP + diphosphate + H(+). The protein operates within pyrimidine metabolism; dUMP biosynthesis; dUMP from dCTP (dUTP route): step 2/2. In terms of biological role, this enzyme is involved in nucleotide metabolism: it produces dUMP, the immediate precursor of thymidine nucleotides and it decreases the intracellular concentration of dUTP so that uracil cannot be incorporated into DNA. This is Deoxyuridine 5'-triphosphate nucleotidohydrolase (dut) from Lactococcus lactis subsp. lactis (strain IL1403) (Streptococcus lactis).